We begin with the raw amino-acid sequence, 223 residues long: Cytotoxic T-lymphocyte protein 4 (223 aa).

Residues 1 to 35 form the signal peptide; it reads MACSGFQSHGAWLELTSRTWPCTALFSLLFIPVFS. Over 38 to 161 the chain is Extracellular; that stretch reads MHVAQPAVVL…IDPEPCPDSD (124 aa). Positions 39–140 constitute an Ig-like V-type domain; the sequence is HVAQPAVVLA…VELLYPPPYY (102 aa). The tract at residues 46-50 is homodimerization; that stretch reads VLANS. Disulfide bonds link Cys-58-Cys-129 and Cys-85-Cys-103. Asn-113 carries N-linked (GlcNAc...) asparagine glycosylation. The interval 134-139 is important for interaction with CD80 and CD86; it reads LYPPPY. Asn-145 is a glycosylation site (N-linked (GlcNAc...) asparagine). Residues 150 to 155 form a homodimerization region; that stretch reads YVIDPE. The chain crosses the membrane as a helical span at residues 162–182; that stretch reads FLLWILAAVSSGLFFYSFLIT. Over 183 to 223 the chain is Cytoplasmic; sequence AVSLSKMLKKRSPLTTGVYVKMPPTEPECEKQFQPYFIPIN. Residue Tyr-201 is modified to Phosphotyrosine; by TXK and JAK2.

As to quaternary structure, homodimer; disulfide-linked. Binds to CD80/B7-1 and CD86/B7.2. Interacts with ICOSLG. N-glycosylation is important for dimerization. In terms of processing, phosphorylation at Tyr-201 prevents binding to the AP-2 adapter complex, blocks endocytosis, and leads to retention of CTLA4 on the cell surface.

It is found in the cell membrane. Functionally, inhibitory receptor acting as a major negative regulator of T-cell responses. The affinity of CTLA4 for its natural B7 family ligands, CD80 and CD86, is considerably stronger than the affinity of their cognate stimulatory coreceptor CD28. The protein is Cytotoxic T-lymphocyte protein 4 (CTLA4) of Sus scrofa (Pig).